Here is a 767-residue protein sequence, read N- to C-terminus: Actin filament-associated protein 1-like 1 (767 aa).

The span at 83–97 (LRDMSDDGERSKEAS) shows a compositional bias: basic and acidic residues. The disordered stretch occupies residues 83 to 145 (LRDMSDDGER…KSPEYISSHN (63 aa)). A phosphoserine mark is found at serine 87, serine 93, serine 97, serine 103, and serine 152. Residues 164-173 (SYPTTRMNGE) are compositionally biased toward polar residues. Residues 164–210 (SYPTTRMNGESKSSYNDSDAMSSSYESYDEEEEEEKGRQPKHQWPSE) are disordered. Over residues 174 to 189 (SKSSYNDSDAMSSSYE) the composition is skewed to low complexity. The PH 1 domain occupies 219 to 315 (DCRICAFLLR…WLKVIREVSR (97 aa)). Residues serine 328 and serine 342 each carry the phosphoserine modification. The tract at residues 341-381 (LSQEKQNSDSDSLGMNDSSSTLSRREACEHGKGKKNSLAEL) is disordered. A compositionally biased stretch (polar residues) spans 349–362 (DSDSLGMNDSSSTL). A PH 2 domain is found at 417–511 (EAPCCGYLNV…WLGLLLVEMG (95 aa)). The residue at position 556 (tyrosine 556) is a Phosphotyrosine. The interval 563 to 605 (KVQDEEPQRPTGAQVKRHASSCSEKSHRADPQVKVKRHASSAN) is disordered. Residues 586-595 (EKSHRADPQV) show a composition bias toward basic and acidic residues. Residues 610 to 700 (GKNRAEEDAR…AVKERLQQSL (91 aa)) are a coiled coil. A disordered region spans residues 704–767 (PALGLSVSSK…KAKEWEMKKT (64 aa)). The segment covering 709 to 733 (SVSSKSKSQETTNKPQSSVPEQSLP) has biased composition (polar residues). Serine 746 is modified (phosphoserine). Residues 758 to 767 (KAKEWEMKKT) show a composition bias toward basic and acidic residues.

In terms of assembly, interacts with CTTN.

It localises to the cytoplasm. The protein resides in the cell projection. Its subcellular location is the podosome. The protein localises to the invadopodium. In terms of biological role, may be involved in podosome and invadosome formation. The chain is Actin filament-associated protein 1-like 1 (Afap1l1) from Rattus norvegicus (Rat).